We begin with the raw amino-acid sequence, 82 residues long: DNA-directed RNA polymerase subunit Rpo5 (82 aa).

The protein belongs to the archaeal Rpo5/eukaryotic RPB5 RNA polymerase subunit family. In terms of assembly, part of the RNA polymerase complex.

Its subcellular location is the cytoplasm. It catalyses the reaction RNA(n) + a ribonucleoside 5'-triphosphate = RNA(n+1) + diphosphate. Its function is as follows. DNA-dependent RNA polymerase (RNAP) catalyzes the transcription of DNA into RNA using the four ribonucleoside triphosphates as substrates. The protein is DNA-directed RNA polymerase subunit Rpo5 of Thermococcus celer.